We begin with the raw amino-acid sequence, 240 residues long: MKRPSGRAADQLRSIRITRNYTKHAEGSVLVEFGDTKVICTASIETGVPRFLKGQGQGWLTAEYGMLPRATGERNQREAARGKQGGRTLEIQRLIGRSLRAALDMSKLGENTLYIDCDVIQADGGTRTASITGAMVAVIDALKVLKKRGGLKGGDPVKQMIAAVSVGIYQGEPVLDLDYLEDSAAETDLNVVMTDAGGFIEVQGTAEGAPFHADELNAMLALAHDGVRQLFELQRAALAD.

Phosphate contacts are provided by residues R87 and G125–R127.

Belongs to the RNase PH family. As to quaternary structure, homohexameric ring arranged as a trimer of dimers.

The enzyme catalyses tRNA(n+1) + phosphate = tRNA(n) + a ribonucleoside 5'-diphosphate. Phosphorolytic 3'-5' exoribonuclease that plays an important role in tRNA 3'-end maturation. Removes nucleotide residues following the 3'-CCA terminus of tRNAs; can also add nucleotides to the ends of RNA molecules by using nucleoside diphosphates as substrates, but this may not be physiologically important. Probably plays a role in initiation of 16S rRNA degradation (leading to ribosome degradation) during starvation. The polypeptide is Ribonuclease PH (Stutzerimonas stutzeri (strain A1501) (Pseudomonas stutzeri)).